Consider the following 430-residue polypeptide: Phosphomethylpyrimidine synthase (430 aa).

Substrate is bound by residues Asn-67, Met-96, Tyr-125, His-161, 183-185 (SRG), 224-227 (DALR), and Glu-263. Zn(2+) is bound at residue His-267. Tyr-290 contributes to the substrate binding site. His-331 is a binding site for Zn(2+). 3 residues coordinate [4Fe-4S] cluster: Cys-406, Cys-409, and Cys-413.

It belongs to the ThiC family. In terms of assembly, homodimer. [4Fe-4S] cluster serves as cofactor.

The catalysed reaction is 5-amino-1-(5-phospho-beta-D-ribosyl)imidazole + S-adenosyl-L-methionine = 4-amino-2-methyl-5-(phosphooxymethyl)pyrimidine + CO + 5'-deoxyadenosine + formate + L-methionine + 3 H(+). Its pathway is cofactor biosynthesis; thiamine diphosphate biosynthesis. Catalyzes the synthesis of the hydroxymethylpyrimidine phosphate (HMP-P) moiety of thiamine from aminoimidazole ribotide (AIR) in a radical S-adenosyl-L-methionine (SAM)-dependent reaction. The protein is Phosphomethylpyrimidine synthase of Campylobacter jejuni subsp. jejuni serotype O:6 (strain 81116 / NCTC 11828).